The following is a 576-amino-acid chain: MNDKQHGPFIVEGKLADSERMKQESNFLRGTISEDLTNGLTGGFEGDNFLLIRFHGMYQQDDRDIRAERAEQKLEPRHAIMLRCRLPGGVITPQQWLGIDKFAEENTLYGSIRLTNRQTFQFHGILKGKVKLAHQLLNQVGLDSLATANDVNRNVLCTSNPIQSELHQQAYEWAKKISEHLLPRTRAYAELWLDKEKVATTDEEPILGSTYLPRKFKTTVVIPPQNDVDLHANDLNFIAIAEGSKLVGFNVLVGGGLAMTHGDKNTYPSMASEFGYIPLEHTLAIAEAVVTTQRDWGNRTERKNAKTKYTLERVGVETFKAEVERRAGVKFEAIRPYEFTGRGDQIGWLKGIDDKWHLTLFIENGRLLDYPGKPLKSGVAEIAKIHKGDFRLTANQNLIIAGIPESEKQRIETIACRHGLIDDKTTVQRKNSMACVSFPTCPLAMAEAERFLPEFVTHVEQLMNKHGIGDEHIVLRVTGCPNGCARAMLAEVGLVGKALDRYNLHLGGNRIGTRIPRMYKENISSQAILSIMDELIGRWATGRQPNEGFGDFLIRTDIIKPVLDSARDFYDWQEAV.

Residues Cys435, Cys441, Cys480, and Cys484 each coordinate [4Fe-4S] cluster. A siroheme-binding site is contributed by Cys484.

It belongs to the nitrite and sulfite reductase 4Fe-4S domain family. Alpha(8)-beta(8). The alpha component is a flavoprotein, the beta component is a hemoprotein. The cofactor is siroheme. [4Fe-4S] cluster serves as cofactor.

The enzyme catalyses hydrogen sulfide + 3 NADP(+) + 3 H2O = sulfite + 3 NADPH + 4 H(+). The protein operates within sulfur metabolism; hydrogen sulfide biosynthesis; hydrogen sulfide from sulfite (NADPH route): step 1/1. Its function is as follows. Component of the sulfite reductase complex that catalyzes the 6-electron reduction of sulfite to sulfide. This is one of several activities required for the biosynthesis of L-cysteine from sulfate. This Photorhabdus laumondii subsp. laumondii (strain DSM 15139 / CIP 105565 / TT01) (Photorhabdus luminescens subsp. laumondii) protein is Sulfite reductase [NADPH] hemoprotein beta-component.